We begin with the raw amino-acid sequence, 140 residues long: Probable prefoldin subunit 6 (140 aa).

It belongs to the prefoldin subunit beta family. As to quaternary structure, heterohexamer of two PFD-alpha type and four PFD-beta type subunits.

Its function is as follows. Binds specifically to cytosolic chaperonin (c-CPN) and transfers target proteins to it. Binds to nascent polypeptide chain and promotes folding in an environment in which there are many competing pathways for nonnative proteins. This is Probable prefoldin subunit 6 (pfdn6) from Dictyostelium discoideum (Social amoeba).